The primary structure comprises 201 residues: FMN-dependent NADH:quinone oxidoreductase (201 aa).

Residues Ser10, Ser16–Ser18, Met96–Phe99, and Ser140–Gly143 contribute to the FMN site.

It belongs to the azoreductase type 1 family. Homodimer. The cofactor is FMN.

It catalyses the reaction 2 a quinone + NADH + H(+) = 2 a 1,4-benzosemiquinone + NAD(+). It carries out the reaction N,N-dimethyl-1,4-phenylenediamine + anthranilate + 2 NAD(+) = 2-(4-dimethylaminophenyl)diazenylbenzoate + 2 NADH + 2 H(+). Quinone reductase that provides resistance to thiol-specific stress caused by electrophilic quinones. In terms of biological role, also exhibits azoreductase activity. Catalyzes the reductive cleavage of the azo bond in aromatic azo compounds to the corresponding amines. The chain is FMN-dependent NADH:quinone oxidoreductase from Salmonella paratyphi A (strain ATCC 9150 / SARB42).